Reading from the N-terminus, the 345-residue chain is Type II methyltransferase M.AplI (345 aa).

The region spanning 25 to 325 (LVVLDLFAGC…KSVKMTLENK (301 aa)) is the SAM-dependent MTase C5-type domain. Cysteine 93 is a catalytic residue.

This sequence belongs to the class I-like SAM-binding methyltransferase superfamily. C5-methyltransferase family.

It carries out the reaction a 2'-deoxycytidine in DNA + S-adenosyl-L-methionine = a 5-methyl-2'-deoxycytidine in DNA + S-adenosyl-L-homocysteine + H(+). In terms of biological role, a methylase, recognizes the double-stranded sequence 5'-CTGCAG-3', methylates C-4 on both strands, and protects the DNA from cleavage by the AplI endonuclease. This chain is Type II methyltransferase M.AplI (aplIM), found in Arthrospira platensis (strain NIES-39 / UTEX 3086 / IAM M-135) (Spirulina platensis).